Reading from the N-terminus, the 126-residue chain is Small ribosomal subunit protein uS13 (126 aa).

A disordered region spans residues 98–126 (PVRGQSTKNNARTRKGRKKTVANKKKATK). Positions 108 to 126 (ARTRKGRKKTVANKKKATK) are enriched in basic residues.

It belongs to the universal ribosomal protein uS13 family. As to quaternary structure, part of the 30S ribosomal subunit. Forms a loose heterodimer with protein S19. Forms two bridges to the 50S subunit in the 70S ribosome.

Located at the top of the head of the 30S subunit, it contacts several helices of the 16S rRNA. In the 70S ribosome it contacts the 23S rRNA (bridge B1a) and protein L5 of the 50S subunit (bridge B1b), connecting the 2 subunits; these bridges are implicated in subunit movement. Contacts the tRNAs in the A and P-sites. The chain is Small ribosomal subunit protein uS13 from Phocaeicola vulgatus (strain ATCC 8482 / DSM 1447 / JCM 5826 / CCUG 4940 / NBRC 14291 / NCTC 11154) (Bacteroides vulgatus).